Consider the following 134-residue polypeptide: Protein LctB (134 aa).

The sequence is that of Protein LctB (lctB) from Bacillus caldotenax.